Reading from the N-terminus, the 436-residue chain is Proteasome-activating nucleotidase (436 aa).

A coiled-coil region spans residues 7 to 98; sequence KDVRDLCEKF…LRSDLQRMKK (92 aa). Residues 223 to 228 and histidine 362 each bind ATP; that span reads GTGKTL. The docks into pockets in the proteasome alpha-ring to cause gate opening stretch occupies residues 434–436; it reads AYH.

The protein belongs to the AAA ATPase family. As to quaternary structure, homohexamer. The hexameric complex has a two-ring architecture resembling a top hat that caps the 20S proteasome core at one or both ends. Upon ATP-binding, the C-terminus of PAN interacts with the alpha-rings of the proteasome core by binding to the intersubunit pockets.

It localises to the cytoplasm. Its function is as follows. ATPase which is responsible for recognizing, binding, unfolding and translocation of substrate proteins into the archaeal 20S proteasome core particle. Is essential for opening the gate of the 20S proteasome via an interaction with its C-terminus, thereby allowing substrate entry and access to the site of proteolysis. Thus, the C-termini of the proteasomal ATPase function like a 'key in a lock' to induce gate opening and therefore regulate proteolysis. Unfolding activity requires energy from ATP hydrolysis, whereas ATP binding alone promotes ATPase-20S proteasome association which triggers gate opening, and supports translocation of unfolded substrates. In Methanopyrus kandleri (strain AV19 / DSM 6324 / JCM 9639 / NBRC 100938), this protein is Proteasome-activating nucleotidase.